A 336-amino-acid chain; its full sequence is Flap endonuclease 1 (336 aa).

Residues 1-98 form an N-domain region; sequence MGVDLGDILS…GTLAARAQMK (98 aa). Aspartate 27, aspartate 80, glutamate 150, glutamate 152, aspartate 171, aspartate 173, and aspartate 234 together coordinate Mg(2+). Residues 114-255 form an I-domain region; the sequence is DSFRYAQATA…RALKLIREHG (142 aa). The tract at residues 328-336 is interaction with PCNA; that stretch reads GQSTLERWL.

The protein belongs to the XPG/RAD2 endonuclease family. FEN1 subfamily. As to quaternary structure, interacts with PCNA. PCNA stimulates the nuclease activity without altering cleavage specificity. Mg(2+) serves as cofactor.

Structure-specific nuclease with 5'-flap endonuclease and 5'-3' exonuclease activities involved in DNA replication and repair. During DNA replication, cleaves the 5'-overhanging flap structure that is generated by displacement synthesis when DNA polymerase encounters the 5'-end of a downstream Okazaki fragment. Binds the unpaired 3'-DNA end and kinks the DNA to facilitate 5' cleavage specificity. Cleaves one nucleotide into the double-stranded DNA from the junction in flap DNA, leaving a nick for ligation. Also involved in the base excision repair (BER) pathway. Acts as a genome stabilization factor that prevents flaps from equilibrating into structures that lead to duplications and deletions. Also possesses 5'-3' exonuclease activity on nicked or gapped double-stranded DNA. The chain is Flap endonuclease 1 from Methanothrix thermoacetophila (strain DSM 6194 / JCM 14653 / NBRC 101360 / PT) (Methanosaeta thermophila).